A 330-amino-acid polypeptide reads, in one-letter code: Probable L-lactate dehydrogenase (330 aa).

Residues Arg105, Asn137, and Arg168 each coordinate substrate. Residue Asn137 coordinates NAD(+). His192 functions as the Proton acceptor in the catalytic mechanism.

Belongs to the LDH/MDH superfamily. LDH family. Homotetramer.

The protein localises to the cytoplasm. The enzyme catalyses (S)-lactate + NAD(+) = pyruvate + NADH + H(+). The protein operates within fermentation; pyruvate fermentation to lactate; (S)-lactate from pyruvate: step 1/1. The sequence is that of Probable L-lactate dehydrogenase from Schizosaccharomyces pombe (strain 972 / ATCC 24843) (Fission yeast).